Consider the following 264-residue polypeptide: MDVCLSSAQQPGRRGEGLSSPGGWLEAEKKGAPQKDSTGGVLEESNKIEPSLHSLQKFVPTDYASYTQEHYRFAGKEIVIQESIESYGAVVWPGAMALCQYLEEHAEELNFQDAKILEIGAGPGLVSIVASILGAQVTATDLPDVLGNLQYNLLKNTLQCTAHLPEVKELVWGEDLDKNFPKSAFYYDYVLASDVVYHHYFLDKLLTTMVYLSQPGTVLLWANKFRFSTDYEFLDKFKQVFDTTLLAEYPESSVKLFKGILKWD.

Over residues 1-10 the composition is skewed to polar residues; the sequence is MDVCLSSAQQ. A disordered region spans residues 1–46; sequence MDVCLSSAQQPGRRGEGLSSPGGWLEAEKKGAPQKDSTGGVLEESN. Residues tryptophan 92, 120-122, aspartate 141, tryptophan 172, and serine 193 contribute to the S-adenosyl-L-methionine site; that span reads GAG.

It belongs to the methyltransferase superfamily. METTL21 family. As to quaternary structure, interacts with members of the heat shock protein 70 families; these proteins may possibly be methylation substrates for the enzyme.

It localises to the nucleus. It is found in the cytoplasm. It catalyses the reaction L-lysyl-[protein] + S-adenosyl-L-methionine = N(6)-methyl-L-lysyl-[protein] + S-adenosyl-L-homocysteine + H(+). It carries out the reaction N(6)-methyl-L-lysyl-[protein] + S-adenosyl-L-methionine = N(6),N(6)-dimethyl-L-lysyl-[protein] + S-adenosyl-L-homocysteine + H(+). The enzyme catalyses N(6),N(6)-dimethyl-L-lysyl-[protein] + S-adenosyl-L-methionine = N(6),N(6),N(6)-trimethyl-L-lysyl-[protein] + S-adenosyl-L-homocysteine + H(+). In terms of biological role, protein-lysine N-methyltransferase using S-adenosyl-L-methionine as methyl donor. Mono-di and trimethylates 'Lys-943' of AARS1. This Homo sapiens (Human) protein is Protein-lysine methyltransferase METTL21C.